Here is a 740-residue protein sequence, read N- to C-terminus: Folic acid synthesis protein fol1 (740 aa).

2 DHNA regions span residues 39 to 160 and 161 to 280; these read DLIH…REID and DQFF…SCFS. The segment at 291–449 is HPPK; the sequence is IDNEAVYISL…EKIVDHDIKP (159 aa). The region spanning 471–730 is the Pterin-binding domain; it reads TYIMAILNLT…DVYEMYKISK (260 aa). The interval 473–740 is DHPS; it reads IMAILNLTPD…MSDAIWKEIY (268 aa). N478 provides a ligand contact to Mg(2+). (7,8-dihydropterin-6-yl)methyl diphosphate is bound by residues T517, D552, N571, D643, K683, and 718–720; that span reads RVH.

In the N-terminal section; belongs to the DHNA family. This sequence in the central section; belongs to the HPPK family. It in the C-terminal section; belongs to the DHPS family. It depends on Mg(2+) as a cofactor.

It catalyses the reaction 7,8-dihydroneopterin = 6-hydroxymethyl-7,8-dihydropterin + glycolaldehyde. The catalysed reaction is 6-hydroxymethyl-7,8-dihydropterin + ATP = (7,8-dihydropterin-6-yl)methyl diphosphate + AMP + H(+). The enzyme catalyses (7,8-dihydropterin-6-yl)methyl diphosphate + 4-aminobenzoate = 7,8-dihydropteroate + diphosphate. It functions in the pathway cofactor biosynthesis; tetrahydrofolate biosynthesis; 2-amino-4-hydroxy-6-hydroxymethyl-7,8-dihydropteridine diphosphate from 7,8-dihydroneopterin triphosphate: step 3/4. It participates in cofactor biosynthesis; tetrahydrofolate biosynthesis; 2-amino-4-hydroxy-6-hydroxymethyl-7,8-dihydropteridine diphosphate from 7,8-dihydroneopterin triphosphate: step 4/4. The protein operates within cofactor biosynthesis; tetrahydrofolate biosynthesis; 7,8-dihydrofolate from 2-amino-4-hydroxy-6-hydroxymethyl-7,8-dihydropteridine diphosphate and 4-aminobenzoate: step 1/2. Catalyzes three sequential steps of tetrahydrofolate biosynthesis. The polypeptide is Folic acid synthesis protein fol1 (fol1) (Pneumocystis carinii).